We begin with the raw amino-acid sequence, 662 residues long: Acetyl-coenzyme A synthetase (662 aa).

Residues 197 to 200 and T317 each bind CoA; that span reads RKGK. Residues 393 to 395, 417 to 422, D510, and R525 contribute to the ATP site; these read GEP and DTWWQT. S533 provides a ligand contact to CoA. An ATP-binding site is contributed by R536. Mg(2+)-binding residues include H549 and V552. K623 bears the N6-acetyllysine mark.

This sequence belongs to the ATP-dependent AMP-binding enzyme family. Mg(2+) is required as a cofactor. In terms of processing, acetylated. Deacetylation by the SIR2-homolog deacetylase activates the enzyme.

It carries out the reaction acetate + ATP + CoA = acetyl-CoA + AMP + diphosphate. Catalyzes the conversion of acetate into acetyl-CoA (AcCoA), an essential intermediate at the junction of anabolic and catabolic pathways. AcsA undergoes a two-step reaction. In the first half reaction, AcsA combines acetate with ATP to form acetyl-adenylate (AcAMP) intermediate. In the second half reaction, it can then transfer the acetyl group from AcAMP to the sulfhydryl group of CoA, forming the product AcCoA. This Helicobacter pylori (strain P12) protein is Acetyl-coenzyme A synthetase.